Here is a 551-residue protein sequence, read N- to C-terminus: CTP synthase (551 aa).

The interval 1–265 (MTRYLFITGG…DHIVAEKWGL (265 aa)) is amidoligase domain. A CTP-binding site is contributed by Ser13. Ser13 provides a ligand contact to UTP. ATP contacts are provided by residues 14 to 19 (SLGKGI) and Asp71. Mg(2+)-binding residues include Asp71 and Glu139. CTP is bound by residues 146 to 148 (DIE), 186 to 191 (KTKPTQ), and Lys222. UTP is bound by residues 186–191 (KTKPTQ) and Lys222. The region spanning 290-541 (TVAMVGKYVD…LRAAIAHRDG (252 aa)) is the Glutamine amidotransferase type-1 domain. Gly351 contributes to the L-glutamine binding site. Cys378 serves as the catalytic Nucleophile; for glutamine hydrolysis. L-glutamine is bound by residues 379 to 382 (LGMQ), Glu402, and Arg469. Residues His514 and Glu516 contribute to the active site.

Belongs to the CTP synthase family. Homotetramer.

It carries out the reaction UTP + L-glutamine + ATP + H2O = CTP + L-glutamate + ADP + phosphate + 2 H(+). It catalyses the reaction L-glutamine + H2O = L-glutamate + NH4(+). The catalysed reaction is UTP + NH4(+) + ATP = CTP + ADP + phosphate + 2 H(+). Its pathway is pyrimidine metabolism; CTP biosynthesis via de novo pathway; CTP from UDP: step 2/2. Allosterically activated by GTP, when glutamine is the substrate; GTP has no effect on the reaction when ammonia is the substrate. The allosteric effector GTP functions by stabilizing the protein conformation that binds the tetrahedral intermediate(s) formed during glutamine hydrolysis. Inhibited by the product CTP, via allosteric rather than competitive inhibition. Catalyzes the ATP-dependent amination of UTP to CTP with either L-glutamine or ammonia as the source of nitrogen. Regulates intracellular CTP levels through interactions with the four ribonucleotide triphosphates. In Halorhodospira halophila (strain DSM 244 / SL1) (Ectothiorhodospira halophila (strain DSM 244 / SL1)), this protein is CTP synthase.